The following is a 334-amino-acid chain: Glyceraldehyde-3-phosphate dehydrogenase (334 aa).

Residues 11 to 12, aspartate 33, and serine 119 each bind NAD(+); that span reads RI. Residues 149 to 151 and threonine 180 contribute to the D-glyceraldehyde 3-phosphate site; that span reads SCT. Catalysis depends on cysteine 150, which acts as the Nucleophile. Asparagine 181 contacts NAD(+). Residues arginine 197, 210–211, and arginine 233 contribute to the D-glyceraldehyde 3-phosphate site; that span reads TG. NAD(+) is bound at residue asparagine 314.

Belongs to the glyceraldehyde-3-phosphate dehydrogenase family. Homotetramer.

The protein localises to the cytoplasm. It catalyses the reaction D-glyceraldehyde 3-phosphate + phosphate + NAD(+) = (2R)-3-phospho-glyceroyl phosphate + NADH + H(+). It participates in carbohydrate degradation; glycolysis; pyruvate from D-glyceraldehyde 3-phosphate: step 1/5. In terms of biological role, catalyzes the oxidative phosphorylation of glyceraldehyde 3-phosphate (G3P) to 1,3-bisphosphoglycerate (BPG) using the cofactor NAD. The first reaction step involves the formation of a hemiacetal intermediate between G3P and a cysteine residue, and this hemiacetal intermediate is then oxidized to a thioester, with concomitant reduction of NAD to NADH. The reduced NADH is then exchanged with the second NAD, and the thioester is attacked by a nucleophilic inorganic phosphate to produce BPG. The chain is Glyceraldehyde-3-phosphate dehydrogenase (gap) from Clostridium acetobutylicum (strain ATCC 824 / DSM 792 / JCM 1419 / IAM 19013 / LMG 5710 / NBRC 13948 / NRRL B-527 / VKM B-1787 / 2291 / W).